A 315-amino-acid polypeptide reads, in one-letter code: Small ribosomal subunit biogenesis GTPase RsgA (315 aa).

The region spanning 79-243 is the CP-type G domain; that stretch reads LSKESHILGA…LIDTPGIKGF (165 aa). GTP is bound by residues 128–131 and 182–190; these read NKID and GHSGVGKSS. Zn(2+) is bound by residues Cys267, Cys272, His274, and Cys280.

This sequence belongs to the TRAFAC class YlqF/YawG GTPase family. RsgA subfamily. Monomer. Associates with 30S ribosomal subunit, binds 16S rRNA. Zn(2+) serves as cofactor.

The protein resides in the cytoplasm. In terms of biological role, one of several proteins that assist in the late maturation steps of the functional core of the 30S ribosomal subunit. Helps release RbfA from mature subunits. May play a role in the assembly of ribosomal proteins into the subunit. Circularly permuted GTPase that catalyzes slow GTP hydrolysis, GTPase activity is stimulated by the 30S ribosomal subunit. This chain is Small ribosomal subunit biogenesis GTPase RsgA, found in Porphyromonas gingivalis (strain ATCC 33277 / DSM 20709 / CIP 103683 / JCM 12257 / NCTC 11834 / 2561).